Reading from the N-terminus, the 486-residue chain is MDLLNSDIILINILKYYNLKKIIINRDNVININILKKLVNLEELHIIYYDNNILNNIPENIKSLYISNLNIINLNFITKLKNITYLDISYNKNSNISNIILPHSIEFLNCESCNINDYNFINNLVNLKKLIISKNKFGNFNNVFPISIVELNMESIQIKDYKFIEKLINLKKLDISFNVKKNNIHLIKFPKSITHLCDYQSYKENYNYLKNLSNIIEYEFDDTIDVKLSDIDISKYYNLQYLDIQNCEINTDILLCHTKLKKIKINFNNSKKNIIIDLPISLECLKISNNFNINNYYFLTQLIRLKKIKIVNSYINILNACKSIEIIKFISCKSTYNFNFNCLEKYKKLDTLSLGFNNIYNLNECILPISIRQIIINNVEIIKKSNFLNNLYNLEYFEINSIICNDIITINLSKIKIKHFKIIYCNDTLFNIMLPDTIEIIEYIHDKNINLDWKKYKNLKKIKTLNNMKDILYKIYKNTNVEIEII.

9 LRR repeats span residues 18–39, 43–59, 60–81, 82–103, 104–125, 126–147, 148–168, 169–190, and 198–219; these read NLKKIIINRDNVININILKKLV, ELHIIYYDNNILNNIPE, NIKSLYISNLNIINLNFITKLK, NITYLDISYNKNSNISNIILPH, SIEFLNCESCNINDYNFINNLV, NLKKLIISKNKFGNFNNVFPIS, IVELNMESIQIKDYKFIEKLI, NLKKLDISFNVKKNNIHLIKFP, and DYQSYKENYNYLKNLSNIIEYE.

This is an uncharacterized protein from Amsacta moorei entomopoxvirus (AmEPV).